The following is a 918-amino-acid chain: Whirlin (918 aa).

In terms of domain architecture, PDZ 1 spans 141–224 (LVSLRRAKAH…LVLSVYSAGR (84 aa)). The interval 240-266 (PQGRSTSPPSSLPQPHGSTLRQREDDR) is disordered. The PDZ 2 domain maps to 280 to 362 (KVNLVLGDGR…LILTVKDVGR (83 aa)). 3 disordered regions span residues 387–407 (NSAG…GFYK), 503–538 (SMKA…TSTT), and 560–824 (EGTG…LEPT). A compositionally biased stretch (low complexity) spans 522–538 (SYSDTGSSTGSHGTSTT). The segment covering 563–572 (GETTQGSTNA) has biased composition (polar residues). 2 stretches are compositionally biased toward pro residues: residues 591-600 (IKPPPPPPPL) and 638-649 (RSPPPGTAPTPG). Over residues 654–672 (QDSPSSPIYASISHANPSS) the composition is skewed to polar residues. Residue S696 is modified to Phosphoserine. Polar residues-rich tracts occupy residues 754–773 (QTRT…TLSE) and 783–798 (EAST…SAKN). The span at 800 to 811 (NGKEQPRTERTA) shows a compositional bias: basic and acidic residues. A PDZ 3 domain is found at 827–910 (LVRVRKSAAT…TKERDYIDFL (84 aa)).

As to quaternary structure, forms homooligomers. Interacts (via C-terminal PDZ domain) with MYO15A; this interaction is necessary for localization of WHRN to stereocilia tips. Interacts (via C-terminal PDZ domain) with MPP1/p55. Interacts with LRRC4C/NGL1. Interacts with MYO7A. Interacts with RPGR. Interacts with EPS8. Interacts with CASK. Interacts with CIB2. Component of USH2 complex, composed of ADGRV1, PDZD7, USH2A and WHRN. Interacts (via PDZ domains) with PDZD7; the interaction is direct. Interacts (via N-terminal PDZ domain) with USH2A (via cytoplasmic region). Interacts with ADGRV1/MASS1 (via cytoplasmic region). In terms of tissue distribution, expressed in the retina. Colocalizes with RPGR in the photoreceptor connecting cilium, a thin bridge linking the cell body and the light-sensing outer segment (at protein level). Detected in the inner ear throughout development from embryonic day 12 to 20 days after birth. Displays a dynamic pattern of expression after birth, demonstrating an ordered appearance and fade-out across stereocilia rows. Isoforms 5, 6, 7 and 8 are not detected in the retina.

Its subcellular location is the cytoplasm. It localises to the cell projection. The protein localises to the stereocilium. It is found in the growth cone. The protein resides in the photoreceptor inner segment. Its subcellular location is the synapse. In terms of biological role, involved in hearing and vision as member of the USH2 complex. Necessary for elongation and maintenance of inner and outer hair cell stereocilia in the organ of Corti in the inner ear. Involved in the maintenance of the hair bundle ankle region, which connects stereocilia in cochlear hair cells of the inner ear. In retina photoreceptors, required for the maintenance of periciliary membrane complex that seems to play a role in regulating intracellular protein transport. This is Whirlin from Mus musculus (Mouse).